The sequence spans 398 residues: Exodeoxyribonuclease 7 large subunit (398 aa).

Belongs to the XseA family. As to quaternary structure, heterooligomer composed of large and small subunits.

It localises to the cytoplasm. The enzyme catalyses Exonucleolytic cleavage in either 5'- to 3'- or 3'- to 5'-direction to yield nucleoside 5'-phosphates.. Bidirectionally degrades single-stranded DNA into large acid-insoluble oligonucleotides, which are then degraded further into small acid-soluble oligonucleotides. This chain is Exodeoxyribonuclease 7 large subunit, found in Salinibacter ruber (strain DSM 13855 / M31).